A 395-amino-acid chain; its full sequence is MLLKFMYIYGIGCGLMPAPLKKGQFLLGYKQRWYLIYTACLHGGLLTVLPFTFPHYMYDDSYMSSNPVLKWTFNLTNITRIMAMFSGVLLMWFRRKRILNLGENLILHCLKCKTLDNRSKKYSKLRKRVRNVLFQMLLVANLSILLGALILFRIHSVQRISKTAMIVAHITQFIYVVFMMTGICVILLVLHWQSERLQIALKDLCSFLNHEERNSLTLSENKANRSLGKLAKLFKLFAENQRLVREVFRTFDLPIALLLLKMFVTNVNLVYHGVQFGNDTIETSSYTRIVGQWVVISHYWSAVLLMNVVDDVTRRSDLKMGDLLREFSHLELVKRDFHLQLELFSDHLRCHPSTYKVCGLFIFNKQTSLAYFFYVLVQVLVLVQFDLKNKVEKRN.

Residues 1–32 (MLLKFMYIYGIGCGLMPAPLKKGQFLLGYKQR) are Cytoplasmic-facing. Residues 33-53 (WYLIYTACLHGGLLTVLPFTF) form a helical membrane-spanning segment. Residues 54-72 (PHYMYDDSYMSSNPVLKWT) are Extracellular-facing. The chain crosses the membrane as a helical span at residues 73–93 (FNLTNITRIMAMFSGVLLMWF). The Cytoplasmic segment spans residues 94–131 (RRKRILNLGENLILHCLKCKTLDNRSKKYSKLRKRVRN). The chain crosses the membrane as a helical span at residues 132–152 (VLFQMLLVANLSILLGALILF). The Extracellular segment spans residues 153–169 (RIHSVQRISKTAMIVAH). Residues 170–190 (ITQFIYVVFMMTGICVILLVL) traverse the membrane as a helical segment. Over 191–250 (HWQSERLQIALKDLCSFLNHEERNSLTLSENKANRSLGKLAKLFKLFAENQRLVREVFRT) the chain is Cytoplasmic. A helical transmembrane segment spans residues 251–271 (FDLPIALLLLKMFVTNVNLVY). The Extracellular portion of the chain corresponds to 272–288 (HGVQFGNDTIETSSYTR). Asn278 is a glycosylation site (N-linked (GlcNAc...) asparagine). The helical transmembrane segment at 289-309 (IVGQWVVISHYWSAVLLMNVV) threads the bilayer. Residues 310–366 (DDVTRRSDLKMGDLLREFSHLELVKRDFHLQLELFSDHLRCHPSTYKVCGLFIFNKQ) lie on the Cytoplasmic side of the membrane. The helical transmembrane segment at 367–387 (TSLAYFFYVLVQVLVLVQFDL) threads the bilayer. At 388 to 395 (KNKVEKRN) the chain is on the extracellular side.

The protein belongs to the insect chemoreceptor superfamily. Gustatory receptor (GR) family. Gr22e subfamily. In terms of tissue distribution, expressed in the adult labellar chemosensory neurons.

Its subcellular location is the cell membrane. In terms of biological role, probable gustatory receptor which mediates acceptance or avoidance behavior, depending on its substrates. This is Putative gustatory receptor 58a (Gr58a) from Drosophila melanogaster (Fruit fly).